Here is a 666-residue protein sequence, read N- to C-terminus: Probable potassium transport system protein Kup (666 aa).

12 helical membrane passes run 16–36, 58–78, 98–118, 141–161, 165–185, 221–241, 253–273, 299–319, 343–363, 373–393, 399–419, and 424–444; these read GFII…LYTM, ISLI…LIAL, ISPW…SDGA, IYQN…VLFG, FGTG…FSFL, IFIL…YSDL, WPFV…WILA, LATL…FTLI, LYIP…VLAF, YGLA…YYLI, PILA…FFLA, and FMHG…VMFI.

The protein belongs to the HAK/KUP transporter (TC 2.A.72) family.

The protein localises to the cell membrane. It catalyses the reaction K(+)(in) + H(+)(in) = K(+)(out) + H(+)(out). Transport of potassium into the cell. Likely operates as a K(+):H(+) symporter. The polypeptide is Probable potassium transport system protein Kup (Streptococcus pyogenes serotype M28 (strain MGAS6180)).